The sequence spans 285 residues: tRNA (cytidine(32)/guanosine(34)-2'-O)-methyltransferase (285 aa).

5 residues coordinate S-adenosyl-L-methionine: Gly-53, Trp-55, Asp-83, Asp-99, and Asp-124. Lys-164 functions as the Proton acceptor in the catalytic mechanism.

It belongs to the class I-like SAM-binding methyltransferase superfamily. RNA methyltransferase RlmE family. TRM7 subfamily.

The protein localises to the cytoplasm. The enzyme catalyses cytidine(32)/guanosine(34) in tRNA + 2 S-adenosyl-L-methionine = 2'-O-methylcytidine(32)/2'-O-methylguanosine(34) in tRNA + 2 S-adenosyl-L-homocysteine + 2 H(+). Methylates the 2'-O-ribose of nucleotides at positions 32 and 34 of the tRNA anticodon loop of substrate tRNAs. Requires trm732 for methylation of the cytidine at position 32 of the anticodon loop of substrate tRNAs. Requires trm734 for methylation of the nucleotide at position 34 of the anticodon loop of substrate tRNAs. Methylates tRNA(Phe). This is tRNA (cytidine(32)/guanosine(34)-2'-O)-methyltransferase from Schizosaccharomyces pombe (strain 972 / ATCC 24843) (Fission yeast).